Consider the following 50-residue polypeptide: C-C motif chemokine 5 (50 aa).

It belongs to the intercrine beta (chemokine CC) family.

It is found in the secreted. Functionally, chemoattractant for blood monocytes, memory T-helper cells and eosinophils. Causes the release of histamine from basophils and activates eosinophils. May activate several chemokine receptors including CCR1, CCR3, CCR4 and CCR5. May also be an agonist of the G protein-coupled receptor GPR75. Together with GPR75, may play a role in neuron survival through activation of a downstream signaling pathway involving the PI3, Akt and MAP kinases. By activating GPR75 may also play a role in insulin secretion by islet cells. This is C-C motif chemokine 5 (CCL5) from Sus scrofa (Pig).